The following is a 303-amino-acid chain: UDP-N-acetylenolpyruvoylglucosamine reductase (303 aa).

Residues 29 to 196 (KIGGPADILI…LEAVLQLEQK (168 aa)) form the FAD-binding PCMH-type domain. The active site involves R174. The active-site Proton donor is S225. The active site involves E295.

It belongs to the MurB family. Requires FAD as cofactor.

It localises to the cytoplasm. It carries out the reaction UDP-N-acetyl-alpha-D-muramate + NADP(+) = UDP-N-acetyl-3-O-(1-carboxyvinyl)-alpha-D-glucosamine + NADPH + H(+). It functions in the pathway cell wall biogenesis; peptidoglycan biosynthesis. Its function is as follows. Cell wall formation. The chain is UDP-N-acetylenolpyruvoylglucosamine reductase from Bacillus velezensis (strain DSM 23117 / BGSC 10A6 / LMG 26770 / FZB42) (Bacillus amyloliquefaciens subsp. plantarum).